The primary structure comprises 137 residues: Small ribosomal subunit protein uS11 (137 aa).

The segment covering 1 to 10 has biased composition (polar residues); it reads MPPKSRSTGP. 2 disordered regions span residues 1–27 and 116–137; these read MPPK…IPHG and GTIS…RRRV. The span at 12-21 shows a compositional bias: basic residues; the sequence is KTQKTRRRDK.

The protein belongs to the universal ribosomal protein uS11 family. As to quaternary structure, part of the 30S ribosomal subunit. Interacts with proteins S7 and S18. Binds to IF-3.

Its function is as follows. Located on the platform of the 30S subunit, it bridges several disparate RNA helices of the 16S rRNA. Forms part of the Shine-Dalgarno cleft in the 70S ribosome. The sequence is that of Small ribosomal subunit protein uS11 from Rhodococcus erythropolis (strain PR4 / NBRC 100887).